Here is a 131-residue protein sequence, read N- to C-terminus: Small ribosomal subunit protein uS11 (131 aa).

The protein belongs to the universal ribosomal protein uS11 family. Part of the 30S ribosomal subunit. Interacts with proteins S7 and S18. Binds to IF-3.

Its function is as follows. Located on the platform of the 30S subunit, it bridges several disparate RNA helices of the 16S rRNA. Forms part of the Shine-Dalgarno cleft in the 70S ribosome. The protein is Small ribosomal subunit protein uS11 of Endomicrobium trichonymphae.